The sequence spans 862 residues: Axin-1 (862 aa).

The segment at Met-1–Pro-78 is disordered. Positions Ala-20 to Glu-29 match the Tankyrase-binding motif motif. Phosphoserine; by CK1 is present on residues Ser-75 and Ser-77. The RGS domain occupies Ser-88–Thr-211. Residues Glu-209–Ser-338 are interaction with TP53. 2 disordered regions span residues Ser-215 to Gly-289 and Thr-316 to Pro-344. At Ser-217 the chain carries Phosphoserine; by CK1. Residues Asn-242–Gly-258 show a composition bias toward acidic residues. Residues Ser-325–Ser-339 are compositionally biased toward low complexity. Positions Ile-348–Gly-433 are interaction with GSK3B. Positions Arg-353 to Glu-411 are interaction with SIAH1 and SIAH2. The interval Leu-413–Ala-441 is disordered. Positions Ser-429 to Ala-441 are enriched in pro residues. The segment at Pro-434–Met-502 is interaction with CTNNB1. Ser-469 carries the post-translational modification Phosphoserine; by CK1. The tract at residues Arg-480–Ala-500 is disordered. Position 481 is a phosphothreonine; by GSK3-beta (Thr-481). 3 positions are modified to phosphoserine: Ser-486, Ser-493, and Ser-511. The tract at residues Gly-507–Ser-757 is interaction with RNF111. Basic residues predominate over residues His-531 to Ala-544. Disordered regions lie at residues His-531 to Asn-629 and Lys-641 to Leu-679. Over residues Arg-545 to Arg-556 the composition is skewed to basic and acidic residues. An interaction with PPP2CA region spans residues Ser-575–Phe-789. Ser-581 is subject to Phosphoserine. The tract at residues Pro-677–Val-752 is interaction with HIPK2. One can recognise a DIX domain in the interval Cys-780–Asp-862. Residues Lys-857 and Lys-860 each participate in a glycyl lysine isopeptide (Lys-Gly) (interchain with G-Cter in SUMO) cross-link.

As to quaternary structure, homodimer. Interacts with ZBED3; the interaction is direct, enhanced by protein kinase GSK3B and casein kinase CSNK1E activities and decreases GSK3B-induced beta-catenin serine and threonine phosphorylations. Component of the beta-catenin destruction complex, containing at least, CTNNB1, an axin and GSK3B, that regulates CTNNB1 protein levels through phosphorylation and ubiquitination. Interacts with CTNNB1 (via the armadillo repeats 2-7). Interacts with GSK3B; the interaction hyperphosphorylates CTNNB1 leading to its ubiquitination and destruction. Component of the AXIN1-HIPK2-TP53 complex. Interacts directly in the complex with TP53 and HIPK2. Interacts with DAXX; the interaction stimulates the interaction of DAXX with TP53, stimulates 'Ser-46' phosphorylation of TP53 and induces cell death on UV irradiation. Also binds APC, SMAD6, SMAD7 and RNF111. Interacts with DIXDC1; prevents interaction with MAP3K1. Interacts with MAP3K4. Interacts with ANKRD6 and AIDA. Interacts with MDFI; the interaction decreases AXIN1-mediated JUN N-terminal kinase (JNK) activation. Interacts with MDFIC; the interaction inhibits beta-cateninin-mediated signaling and AXIN1-mediated JUN N-terminal kinase (JNK) activation. Interacts with LRP5 (via its phosphorylated PPPSP motifs); the interaction is stimulated by WNT1 and GSK3B and activates beta-catenin signaling. Interacts (via the C-terminal) with PPP1CA; the interaction dephosphorylates AXIN1 and regulates interaction with GSK3B. Interacts with PPP2CA; the interaction dephosphorylates AXIN1. Interacts with MACF1. Found in a complex composed of MACF1, APC, AXIN1, CTNNB1 and GSK3B. Interacts with TNKS. Interacts with DAB2; the interaction is mutually exclusive with the AXIN1:PPP1CA interaction. Interacts with WDR26. Interacts with GID8. Interacts with SIAH1 and SIAH2; both probably catalyze AXIN1 ubiquitination and subsequent proteasome-mediated ubiquitin-dependent degradation. Interaction with GSK3B and AXIN1 is competitive. In terms of processing, phosphorylation and dephosphorylation of AXIN1 regulates assembly and function of the beta-catenin complex. Phosphorylated by CK1 and GSK3B. Dephosphorylated by PPP1CA and PPP2CA. Phosphorylation by CK1 enhances binding of GSK3B to AXIN1. Post-translationally, ADP-ribosylated by tankyrase TNKS and TNKS2. Poly-ADP-ribosylated protein is recognized by RNF146, followed by ubiquitination at 'Lys-48' and subsequent activation of the Wnt signaling pathway. Ubiquitinated by RNF146 when poly-ADP-ribosylated, leading to its degradation and subsequent activation of the Wnt signaling pathway. Sumoylation at Lys-857 and Lys-860 prevents ubiquitination and degradation. Sumoylation is required for AXIN1-mediated JNK activation. Deubiquitinated by USP34, deubiquitinated downstream of beta-catenin stabilization step: deubiquitination is important for nuclear accumulation during Wnt signaling to positively regulate beta-catenin (CTNBB1)-mediated transcription. Ubiquitination by SIAH1 and SIAH2 induces its proteasomal degradation as part of the activation of the Wnt signaling pathway. Ubiquitously expressed.

It is found in the cytoplasm. Its subcellular location is the nucleus. The protein localises to the membrane. It localises to the cell membrane. In terms of biological role, component of the beta-catenin destruction complex required for regulating CTNNB1 levels through phosphorylation and ubiquitination, and modulating Wnt-signaling. Controls dorsoventral patterning via two opposing effects; down-regulates CTNNB1 to inhibit the Wnt signaling pathway and ventralize embryos, but also dorsalizes embryos by activating a Wnt-independent JNK signaling pathway. In Wnt signaling, probably facilitates the phosphorylation of CTNNB1 and APC by GSK3B. Likely to function as a tumor suppressor. Enhances TGF-beta signaling by recruiting the RNF111 E3 ubiquitin ligase and promoting the degradation of inhibitory SMAD7. Also a component of the AXIN1-HIPK2-TP53 complex which controls cell growth, apoptosis and development. Facilitates the phosphorylation of TP53 by HIPK2 upon ultraviolet irradiation. The chain is Axin-1 (AXIN1) from Homo sapiens (Human).